Reading from the N-terminus, the 465-residue chain is UDP-N-acetylmuramate--L-alanine ligase (465 aa).

118 to 124 (GTHGKTT) is an ATP binding site.

This sequence belongs to the MurCDEF family.

It localises to the cytoplasm. It catalyses the reaction UDP-N-acetyl-alpha-D-muramate + L-alanine + ATP = UDP-N-acetyl-alpha-D-muramoyl-L-alanine + ADP + phosphate + H(+). It participates in cell wall biogenesis; peptidoglycan biosynthesis. Cell wall formation. In Ruegeria pomeroyi (strain ATCC 700808 / DSM 15171 / DSS-3) (Silicibacter pomeroyi), this protein is UDP-N-acetylmuramate--L-alanine ligase.